Consider the following 200-residue polypeptide: MKSSKQLVQDAKDYRFNPAIPLRIYLKTCIGILEKAQCAFQANDLSLSFIYYFRYVDLLTNKLSRHPELLRMDASSSSSSSYIHKREYLQLIKLEVPAVCKIIESLRTQIDSQYSKLQTSLANNIAKPNINANTTPVQVEQQPLPKKSFDEYSFNQSISFFQKISNAQLNTGASSQSQATARDEAYRLNYPELPRLTFST.

This sequence belongs to the RFU1 family. In terms of assembly, interacts with BRO1 and DOA4.

It localises to the endosome. Functionally, inhibitor of the DOA4 deubiquitinase involved in the regulation of protein degradation by the proteasome and maintenance of a normal level of free ubiquitin. This is Regulator of free ubiquitin chains 1 (RFU1) from Saccharomyces cerevisiae (strain RM11-1a) (Baker's yeast).